Here is a 131-residue protein sequence, read N- to C-terminus: MASPAKKVVRKKRERKNVTNGVAHIHATFNNTMITIADTAGNVLAWSTSGAKGFKGSRKSTPFAAQVAAEDCAKKAQEHGLRNVEVYVKGPGSGRESALRALQAAGFNISFIKDVTPIPHNGCRPPKKRRV.

The protein belongs to the universal ribosomal protein uS11 family. In terms of assembly, part of the 30S ribosomal subunit. Interacts with proteins S7 and S18. Binds to IF-3.

Its function is as follows. Located on the platform of the 30S subunit, it bridges several disparate RNA helices of the 16S rRNA. Forms part of the Shine-Dalgarno cleft in the 70S ribosome. The sequence is that of Small ribosomal subunit protein uS11 from Pelobacter propionicus (strain DSM 2379 / NBRC 103807 / OttBd1).